The following is a 132-amino-acid chain: Homeobox protein ceh-1 (132 aa).

The segment at residues 1–60 (MRRARTAFTYEQLVALENKFKTSRYLSVVERLNLAIQLQLSETQVKIWFQNRRTKWKKHN) is a DNA-binding region (homeobox). The segment at 56-80 (WKKHNPGQDANTPQTPPSSDETQIQ) is disordered. The segment covering 63 to 80 (QDANTPQTPPSSDETQIQ) has biased composition (polar residues).

Its subcellular location is the nucleus. The protein is Homeobox protein ceh-1 (ceh-1) of Caenorhabditis elegans.